A 411-amino-acid polypeptide reads, in one-letter code: Bifunctional protein GlmU (411 aa).

The segment at 1-204 (MDAIILCAGK…NGKLHGVELK (204 aa)) is pyrophosphorylase. Residues 6–9 (LCAG), glutamine 74, and glycine 79 each bind UTP. 4 residues coordinate N-acetyl-alpha-D-glucosamine 1-phosphate: threonine 80, glycine 130, asparagine 142, and asparagine 158. A linker region spans residues 205–224 (GYWNDIGHPWDVLSANNHFL). The N-acetyltransferase stretch occupies residues 225–411 (NKIISKVSGK…DELVITKKRN (187 aa)). Histidine 308 acts as the Proton acceptor in catalysis. The acetyl-CoA site is built by alanine 384 and lysine 401.

It in the N-terminal section; belongs to the N-acetylglucosamine-1-phosphate uridyltransferase family. This sequence in the C-terminal section; belongs to the transferase hexapeptide repeat family.

It catalyses the reaction N-acetyl-alpha-D-glucosamine 1-phosphate + UTP + H(+) = UDP-N-acetyl-alpha-D-glucosamine + diphosphate. It carries out the reaction alpha-D-glucosamine 1-phosphate + acetyl-CoA = N-acetyl-alpha-D-glucosamine 1-phosphate + CoA + H(+). The protein operates within nucleotide-sugar biosynthesis; UDP-N-acetyl-alpha-D-glucosamine biosynthesis; N-acetyl-alpha-D-glucosamine 1-phosphate from alpha-D-glucosamine 6-phosphate (route II): step 2/2. Its pathway is nucleotide-sugar biosynthesis; UDP-N-acetyl-alpha-D-glucosamine biosynthesis; UDP-N-acetyl-alpha-D-glucosamine from N-acetyl-alpha-D-glucosamine 1-phosphate: step 1/1. Catalyzes the last two sequential reactions in the de novo biosynthetic pathway for UDP-N-acetyl-glucosamine (UDP-GlcNAc). Responsible for the acetylation of GlcN-1-P to GlcNAc-1-P, and for the uridyl transfer from UTP to GlcNAc-1-P, to produce UDP-GlcNAc and pyrophosphate. The polypeptide is Bifunctional protein GlmU (Methanococcus maripaludis (strain DSM 14266 / JCM 13030 / NBRC 101832 / S2 / LL)).